The primary structure comprises 306 residues: Glutaminase (306 aa).

7 residues coordinate substrate: Ser64, Asn115, Glu159, Asn166, Tyr190, Tyr242, and Val260.

The protein belongs to the glutaminase family. In terms of assembly, homotetramer.

The catalysed reaction is L-glutamine + H2O = L-glutamate + NH4(+). This is Glutaminase from Aliivibrio salmonicida (strain LFI1238) (Vibrio salmonicida (strain LFI1238)).